The following is a 91-amino-acid chain: Small ribosomal subunit protein uS19 (91 aa).

Belongs to the universal ribosomal protein uS19 family.

Its function is as follows. Protein S19 forms a complex with S13 that binds strongly to the 16S ribosomal RNA. The polypeptide is Small ribosomal subunit protein uS19 (Methylibium petroleiphilum (strain ATCC BAA-1232 / LMG 22953 / PM1)).